The sequence spans 739 residues: Phosphoribosylformylglycinamidine synthase subunit PurL (739 aa).

His-54 is an active-site residue. The ATP site is built by Tyr-57 and Lys-96. Residue Glu-98 coordinates Mg(2+). Substrate-binding positions include 99-102 and Arg-121; that span reads SHNH. The active-site Proton acceptor is the His-100. Asp-122 contributes to the Mg(2+) binding site. Gln-245 lines the substrate pocket. Asp-273 provides a ligand contact to Mg(2+). 317–319 lines the substrate pocket; that stretch reads ESQ. Asp-500 and Gly-537 together coordinate ATP. A Mg(2+)-binding site is contributed by Asn-538. A substrate-binding site is contributed by Ser-540.

The protein belongs to the FGAMS family. In terms of assembly, monomer. Part of the FGAM synthase complex composed of 1 PurL, 1 PurQ and 2 PurS subunits.

It is found in the cytoplasm. It carries out the reaction N(2)-formyl-N(1)-(5-phospho-beta-D-ribosyl)glycinamide + L-glutamine + ATP + H2O = 2-formamido-N(1)-(5-O-phospho-beta-D-ribosyl)acetamidine + L-glutamate + ADP + phosphate + H(+). It participates in purine metabolism; IMP biosynthesis via de novo pathway; 5-amino-1-(5-phospho-D-ribosyl)imidazole from N(2)-formyl-N(1)-(5-phospho-D-ribosyl)glycinamide: step 1/2. Its function is as follows. Part of the phosphoribosylformylglycinamidine synthase complex involved in the purines biosynthetic pathway. Catalyzes the ATP-dependent conversion of formylglycinamide ribonucleotide (FGAR) and glutamine to yield formylglycinamidine ribonucleotide (FGAM) and glutamate. The FGAM synthase complex is composed of three subunits. PurQ produces an ammonia molecule by converting glutamine to glutamate. PurL transfers the ammonia molecule to FGAR to form FGAM in an ATP-dependent manner. PurS interacts with PurQ and PurL and is thought to assist in the transfer of the ammonia molecule from PurQ to PurL. The sequence is that of Phosphoribosylformylglycinamidine synthase subunit PurL from Bacillus mycoides (strain KBAB4) (Bacillus weihenstephanensis).